A 984-amino-acid polypeptide reads, in one-letter code: G patch domain-containing protein TGH homolog (984 aa).

Positions 130–144 (EHARKQASKEQKERP) are enriched in basic and acidic residues. A disordered region spans residues 130–153 (EHARKQASKEQKERPSAIPGPIPD). Residues 160–202 (TTSIGVKLLMKMGWRQGRSIRDAHADSLYESRREARKAFLALS) form the G-patch domain. The SURP motif repeat unit spans residues 408-450 (LIEGCAAMVARCGKHIEDFYKEKSKTNTQFNFLNEGDGCSYYA). 4 disordered regions span residues 464-503 (QKPDTVQSKSSDKLTAENRGKILGERPLDRSTKSSSSSFP), 679-717 (TRTNEVESSSIAPQHTSVAGATETEAKGAATDPEIESSS), 775-806 (LGLDVPPEKPTPPNVLFRSETPSTANAIGISR), and 820-984 (ESAL…HHKR). Basic and acidic residues predominate over residues 473–495 (SSDKLTAENRGKILGERPLDRST). A compositionally biased stretch (polar residues) spans 679–695 (TRTNEVESSSIAPQHTS). The segment covering 697 to 709 (AGATETEAKGAAT) has biased composition (low complexity). Residues 814–859 (QEIKENESALDKEEIANASADVPSDNVEELGLKYEKQEHRAEKSRS) are a coiled coil. A compositionally biased stretch (basic and acidic residues) spans 843 to 858 (LGLKYEKQEHRAEKSR). 3 stretches are compositionally biased toward basic residues: residues 882 to 892 (SRERRSRHKIR), 905 to 922 (HRSKKRKSHSKHRTRRSR), and 934 to 946 (TKRKHREKRHHRT). A compositionally biased stretch (basic and acidic residues) spans 947 to 974 (RNPDTDSSDHEYEERHKSSSRRSSDKDR). The segment covering 975–984 (SRRRSRHHKR) has biased composition (basic residues).

It localises to the nucleus. Functionally, functions as a component of microRNA (miRNA) and small interfering RNA (siRNA) biogenesis. May assist Dicer-like (DCL) proteins to efficiently process and/or recruit the precursors of miRNAs and siRNAs. This Oryza sativa subsp. japonica (Rice) protein is G patch domain-containing protein TGH homolog.